Consider the following 292-residue polypeptide: MNTESAASTADRLRAAVHWLLPTRLLSRLTWHVARSPRPWLKNRLNRFLVRRYGLDLSEAEHSDPTAYPTFYALFTRALRPGARPLPEDPQALISPCDGTVSAVGHLHGERLIQAKGIEYSLRGLLHGLDPAPFRDGAFVTIYLSPRDYHRFHAPVAGRLQAERHVPGRLLTVAPSAVRAIRGLFLRNERHVTLWETVVGLVAVVPVGAVNVGSIETVWGGPVGEAPGLSRDFGPGEGVFLGRGEELGRFNLGSTVVVVLPAGVVRWADGLVAGRPVRMGEVLGRLRRADAR.

Catalysis depends on charge relay system; for autoendoproteolytic cleavage activity residues Asp-98, His-153, and Ser-254. The Schiff-base intermediate with substrate; via pyruvic acid; for decarboxylase activity role is filled by Ser-254. The residue at position 254 (Ser-254) is a Pyruvic acid (Ser); by autocatalysis.

This sequence belongs to the phosphatidylserine decarboxylase family. PSD-B subfamily. Prokaryotic type I sub-subfamily. In terms of assembly, heterodimer of a large membrane-associated beta subunit and a small pyruvoyl-containing alpha subunit. The cofactor is pyruvate. Is synthesized initially as an inactive proenzyme. Formation of the active enzyme involves a self-maturation process in which the active site pyruvoyl group is generated from an internal serine residue via an autocatalytic post-translational modification. Two non-identical subunits are generated from the proenzyme in this reaction, and the pyruvate is formed at the N-terminus of the alpha chain, which is derived from the carboxyl end of the proenzyme. The autoendoproteolytic cleavage occurs by a canonical serine protease mechanism, in which the side chain hydroxyl group of the serine supplies its oxygen atom to form the C-terminus of the beta chain, while the remainder of the serine residue undergoes an oxidative deamination to produce ammonia and the pyruvoyl prosthetic group on the alpha chain. During this reaction, the Ser that is part of the protease active site of the proenzyme becomes the pyruvoyl prosthetic group, which constitutes an essential element of the active site of the mature decarboxylase.

Its subcellular location is the cell membrane. It carries out the reaction a 1,2-diacyl-sn-glycero-3-phospho-L-serine + H(+) = a 1,2-diacyl-sn-glycero-3-phosphoethanolamine + CO2. The protein operates within phospholipid metabolism; phosphatidylethanolamine biosynthesis; phosphatidylethanolamine from CDP-diacylglycerol: step 2/2. Its function is as follows. Catalyzes the formation of phosphatidylethanolamine (PtdEtn) from phosphatidylserine (PtdSer). This is Phosphatidylserine decarboxylase proenzyme from Halorhodospira halophila (strain DSM 244 / SL1) (Ectothiorhodospira halophila (strain DSM 244 / SL1)).